Consider the following 72-residue polypeptide: Keratin-associated protein 19-5 (72 aa).

The protein belongs to the KRTAP type 19 family. As to quaternary structure, interacts with hair keratins.

Its function is as follows. In the hair cortex, hair keratin intermediate filaments are embedded in an interfilamentous matrix, consisting of hair keratin-associated proteins (KRTAP), which are essential for the formation of a rigid and resistant hair shaft through their extensive disulfide bond cross-linking with abundant cysteine residues of hair keratins. The matrix proteins include the high-sulfur and high-glycine-tyrosine keratins. This Homo sapiens (Human) protein is Keratin-associated protein 19-5 (KRTAP19-5).